The chain runs to 268 residues: Mesoderm posterior protein 1 (268 aa).

The segment at 17–93 (AAWGPTRRPP…RQSASEREKL (77 aa)) is disordered. Residues 36 to 48 (LVSSPDSWGSTPA) show a composition bias toward polar residues. Residues 66 to 86 (APSVGRRGARSSRLGSGQRQS) show a composition bias toward low complexity. The bHLH domain maps to 82-136 (GQRQSASEREKLRMRTLARALHELRRFLPPSVAPAGQSLTKIETLRLAIRYIGHL). A CPLCP motif is present at residues 163 to 167 (CPLCP). Tandem repeats lie at residues 182-183 (GQ) and 184-185 (GQ). Residues 182 to 185 (GQGQ) form a 2 X 2 AA tandem repeats of G-Q region.

The protein localises to the nucleus. Its function is as follows. Transcription factor. Plays a role in the epithelialization of somitic mesoderm and in the development of cardiac mesoderm. Defines the rostrocaudal patterning of the somites by participating in distinct Notch pathways. The chain is Mesoderm posterior protein 1 (MESP1) from Homo sapiens (Human).